Here is a 271-residue protein sequence, read N- to C-terminus: Formamidopyrimidine-DNA glycosylase (271 aa).

The active-site Schiff-base intermediate with DNA is P2. E3 serves as the catalytic Proton donor. Residue K57 is the Proton donor; for beta-elimination activity of the active site. DNA contacts are provided by H90, R109, and K150. The FPG-type zinc-finger motif lies at L235 to K269. The active-site Proton donor; for delta-elimination activity is the R259.

This sequence belongs to the FPG family. Monomer. Requires Zn(2+) as cofactor.

The enzyme catalyses Hydrolysis of DNA containing ring-opened 7-methylguanine residues, releasing 2,6-diamino-4-hydroxy-5-(N-methyl)formamidopyrimidine.. It catalyses the reaction 2'-deoxyribonucleotide-(2'-deoxyribose 5'-phosphate)-2'-deoxyribonucleotide-DNA = a 3'-end 2'-deoxyribonucleotide-(2,3-dehydro-2,3-deoxyribose 5'-phosphate)-DNA + a 5'-end 5'-phospho-2'-deoxyribonucleoside-DNA + H(+). Involved in base excision repair of DNA damaged by oxidation or by mutagenic agents. Acts as a DNA glycosylase that recognizes and removes damaged bases. Has a preference for oxidized purines, such as 7,8-dihydro-8-oxoguanine (8-oxoG). Has AP (apurinic/apyrimidinic) lyase activity and introduces nicks in the DNA strand. Cleaves the DNA backbone by beta-delta elimination to generate a single-strand break at the site of the removed base with both 3'- and 5'-phosphates. This is Formamidopyrimidine-DNA glycosylase from Haemophilus influenzae (strain 86-028NP).